Here is a 141-residue protein sequence, read N- to C-terminus: Large ribosomal subunit protein uL11 (141 aa).

This sequence belongs to the universal ribosomal protein uL11 family. Part of the ribosomal stalk of the 50S ribosomal subunit. Interacts with L10 and the large rRNA to form the base of the stalk. L10 forms an elongated spine to which L12 dimers bind in a sequential fashion forming a multimeric L10(L12)X complex. One or more lysine residues are methylated.

Functionally, forms part of the ribosomal stalk which helps the ribosome interact with GTP-bound translation factors. This is Large ribosomal subunit protein uL11 from Alkaliphilus metalliredigens (strain QYMF).